Here is a 535-residue protein sequence, read N- to C-terminus: CTP synthase (535 aa).

The interval 1-267 (MTKYIFVTGG…DQIVCDHLKL (267 aa)) is amidoligase domain. Position 13 (serine 13) interacts with CTP. Serine 13 lines the UTP pocket. 14-19 (SLGKGI) serves as a coordination point for ATP. Residue tyrosine 54 coordinates L-glutamine. Aspartate 71 contacts ATP. 2 residues coordinate Mg(2+): aspartate 71 and glutamate 141. Residues 148–150 (DIE), 188–193 (KTKPTQ), and lysine 224 each bind CTP. Residues 188–193 (KTKPTQ) and lysine 224 each bind UTP. 240–242 (RDA) lines the ATP pocket. Residues 292–534 (KIALVGKYVE…VRASITNKES (243 aa)) form the Glutamine amidotransferase type-1 domain. Glycine 354 provides a ligand contact to L-glutamine. The Nucleophile; for glutamine hydrolysis role is filled by cysteine 381. L-glutamine is bound by residues 382 to 385 (LGMQ), glutamate 405, and arginine 462. Active-site residues include histidine 507 and glutamate 509.

This sequence belongs to the CTP synthase family. As to quaternary structure, homotetramer.

It carries out the reaction UTP + L-glutamine + ATP + H2O = CTP + L-glutamate + ADP + phosphate + 2 H(+). It catalyses the reaction L-glutamine + H2O = L-glutamate + NH4(+). The catalysed reaction is UTP + NH4(+) + ATP = CTP + ADP + phosphate + 2 H(+). Its pathway is pyrimidine metabolism; CTP biosynthesis via de novo pathway; CTP from UDP: step 2/2. With respect to regulation, allosterically activated by GTP, when glutamine is the substrate; GTP has no effect on the reaction when ammonia is the substrate. The allosteric effector GTP functions by stabilizing the protein conformation that binds the tetrahedral intermediate(s) formed during glutamine hydrolysis. Inhibited by the product CTP, via allosteric rather than competitive inhibition. In terms of biological role, catalyzes the ATP-dependent amination of UTP to CTP with either L-glutamine or ammonia as the source of nitrogen. Regulates intracellular CTP levels through interactions with the four ribonucleotide triphosphates. The polypeptide is CTP synthase (Bacillus cereus (strain AH187)).